The following is a 152-amino-acid chain: UPF0178 protein YE1167 (152 aa).

Belongs to the UPF0178 family.

This is UPF0178 protein YE1167 from Yersinia enterocolitica serotype O:8 / biotype 1B (strain NCTC 13174 / 8081).